Consider the following 318-residue polypeptide: Acetyl-coenzyme A carboxylase carboxyl transferase subunit alpha (318 aa).

In terms of domain architecture, CoA carboxyltransferase C-terminal spans 34 to 295 (SIEEEITKLR…KATIKQQLAQ (262 aa)).

This sequence belongs to the AccA family. In terms of assembly, acetyl-CoA carboxylase is a heterohexamer composed of biotin carboxyl carrier protein (AccB), biotin carboxylase (AccC) and two subunits each of ACCase subunit alpha (AccA) and ACCase subunit beta (AccD).

It is found in the cytoplasm. The enzyme catalyses N(6)-carboxybiotinyl-L-lysyl-[protein] + acetyl-CoA = N(6)-biotinyl-L-lysyl-[protein] + malonyl-CoA. It functions in the pathway lipid metabolism; malonyl-CoA biosynthesis; malonyl-CoA from acetyl-CoA: step 1/1. In terms of biological role, component of the acetyl coenzyme A carboxylase (ACC) complex. First, biotin carboxylase catalyzes the carboxylation of biotin on its carrier protein (BCCP) and then the CO(2) group is transferred by the carboxyltransferase to acetyl-CoA to form malonyl-CoA. The chain is Acetyl-coenzyme A carboxylase carboxyl transferase subunit alpha from Pseudoalteromonas atlantica (strain T6c / ATCC BAA-1087).